The primary structure comprises 474 residues: Proline--tRNA ligase (474 aa).

This sequence belongs to the class-II aminoacyl-tRNA synthetase family. ProS type 3 subfamily. As to quaternary structure, homodimer.

The protein localises to the cytoplasm. The enzyme catalyses tRNA(Pro) + L-proline + ATP = L-prolyl-tRNA(Pro) + AMP + diphosphate. Catalyzes the attachment of proline to tRNA(Pro) in a two-step reaction: proline is first activated by ATP to form Pro-AMP and then transferred to the acceptor end of tRNA(Pro). In Onion yellows phytoplasma (strain OY-M), this protein is Proline--tRNA ligase.